A 267-amino-acid polypeptide reads, in one-letter code: Adenosine 5'-phosphosulfate reductase (267 aa).

A disordered region spans residues 1–29 (MPPFATIPATERNSAAQHQDPSPMSQPFD). Residues 11–25 (ERNSAAQHQDPSPMS) are compositionally biased toward polar residues. Positions 139, 140, 228, and 231 each coordinate [4Fe-4S] cluster. Cysteine 256 serves as the catalytic Nucleophile; cysteine thiosulfonate intermediate.

Belongs to the PAPS reductase family. CysH subfamily. It depends on [4Fe-4S] cluster as a cofactor.

It localises to the cytoplasm. It catalyses the reaction [thioredoxin]-disulfide + sulfite + AMP + 2 H(+) = adenosine 5'-phosphosulfate + [thioredoxin]-dithiol. It participates in sulfur metabolism; hydrogen sulfide biosynthesis; sulfite from sulfate. In terms of biological role, catalyzes the formation of sulfite from adenosine 5'-phosphosulfate (APS) using thioredoxin as an electron donor. In Pseudomonas aeruginosa (strain LESB58), this protein is Adenosine 5'-phosphosulfate reductase.